A 599-amino-acid polypeptide reads, in one-letter code: MLRKGTVALINPNQIHPPIAPYALDVLTTALEASGFEAHVLDLTFHLDDWRQTLRDYFRAERPLLVGVTCRNTDTVYALEQRPFVDGYKAVIDEVRRLTAAPVVAGGVGFSTMPFALVDYFGIEYGVKGPGEKIICDLARALAEGRSADRIHIPGLLVNRGPGNVTRVAPPALDPRAAPAPSSSPSPSPAPSSSSAPVPVPLSFAAVGHHESRAWQAETELPYTRRSGEPYKVDNLRYYREGGLGSILTKNGCVYKCSFCVEPDAKGTQFARRGITAVVDEMEALTAQGIHDLHTTDSEFNLSIAHSKNLLREIVRRRDHDATSPLRDLRLWVYCQPSPFDEEFAELLAAAGCAGVNIGADHTRPEMLDGWKVTAKGTRYYDFADTERLVQLCHRNGMLTMVEALFGMPGETLETMRDCVDRMMELDATVTGFSLGLRLLPYMGLAKSLAEQCDGVRTVRGLQSNNASGPIVLKQLHQCDGPIEYERQFMFDESGDFRLVCYFSPDLPEAPGTADSPDGIWRASVDFLWDRIPKSEQYRVMLPTLSGSSENDNNYADNPFLTSLNRKGYTGAFWAHWRDREAIMSGATLPLGELAEAVR.

The B12-binding domain maps to 4–149; sequence KGTVALINPN…RALAEGRSAD (146 aa). The segment at 167 to 197 is disordered; it reads RVAPPALDPRAAPAPSSSPSPSPAPSSSSAP. Residues 168-181 show a composition bias toward low complexity; sequence VAPPALDPRAAPAP. The Radical SAM core domain occupies 239–492; it reads YREGGLGSIL…IEYERQFMFD (254 aa). [4Fe-4S] cluster-binding residues include cysteine 253, cysteine 257, and cysteine 260.

[4Fe-4S] cluster serves as cofactor. Requires cob(II)alamin as cofactor.

The enzyme catalyses L-tryptophan + S-adenosyl-L-methionine = 2-methyl-L-tryptophan + S-adenosyl-L-homocysteine + H(+). Functionally, involved in the biosynthetic pathway of the antibiotic thiostrepton A. First, TsrM catalyzes the transfer of a methyl group from S-adenosyl methionine (SAM) to cobalamin, leading to the formation of methylcobalamin (CH3-cobalamin) and S-adenosyl-L-homocysteine (SAH). Then the methyl group is transferred to the C2 position of tryptophan (Trp) with the concerted action of the radical SAM [4Fe-4S] center, leading to the production of methyltryptophan. This Streptomyces laurentii protein is Tryptophan 2-C-methyltransferase.